The primary structure comprises 444 residues: Glutamyl-tRNA reductase (444 aa).

Substrate contacts are provided by residues 49-52, S109, 114-116, and Q120; these read TCNR and ETQ. C50 (nucleophile) is an active-site residue. 189–194 is an NADP(+) binding site; that stretch reads GAGKMG.

Belongs to the glutamyl-tRNA reductase family. As to quaternary structure, homodimer.

It carries out the reaction (S)-4-amino-5-oxopentanoate + tRNA(Glu) + NADP(+) = L-glutamyl-tRNA(Glu) + NADPH + H(+). It participates in porphyrin-containing compound metabolism; protoporphyrin-IX biosynthesis; 5-aminolevulinate from L-glutamyl-tRNA(Glu): step 1/2. In terms of biological role, catalyzes the NADPH-dependent reduction of glutamyl-tRNA(Glu) to glutamate 1-semialdehyde (GSA). The protein is Glutamyl-tRNA reductase of Bacillus anthracis (strain A0248).